The chain runs to 163 residues: MEKLGINWGLLIAQLINVVFVVWLLTTFLYRPILNMLNQRTNRIQEGLQDAERVREQLANAKRDYDAELAKARQEAASILAQAQERARAQAAEIIAQAHRDAEKIKSDTLAQAEQERQRMLGELKDRMAELVVLTAERVLNAELKANHDRLIEESLAELGKYN.

A helical membrane pass occupies residues 9–29; the sequence is GLLIAQLINVVFVVWLLTTFL.

This sequence belongs to the ATPase B chain family. In terms of assembly, F-type ATPases have 2 components, F(1) - the catalytic core - and F(0) - the membrane proton channel. F(1) has five subunits: alpha(3), beta(3), gamma(1), delta(1), epsilon(1). F(0) has four main subunits: a(1), b(2) and c(10-14). The alpha and beta chains form an alternating ring which encloses part of the gamma chain. F(1) is attached to F(0) by a central stalk formed by the gamma and epsilon chains, while a peripheral stalk is formed by the delta and b chains.

It localises to the cell membrane. F(1)F(0) ATP synthase produces ATP from ADP in the presence of a proton or sodium gradient. F-type ATPases consist of two structural domains, F(1) containing the extramembraneous catalytic core and F(0) containing the membrane proton channel, linked together by a central stalk and a peripheral stalk. During catalysis, ATP synthesis in the catalytic domain of F(1) is coupled via a rotary mechanism of the central stalk subunits to proton translocation. In terms of biological role, component of the F(0) channel, it forms part of the peripheral stalk, linking F(1) to F(0). This chain is ATP synthase subunit b, found in Roseiflexus castenholzii (strain DSM 13941 / HLO8).